Consider the following 492-residue polypeptide: Cell death protein 6 (492 aa).

Positions 19–29 are enriched in low complexity; that stretch reads GNNINGEGSSS. The segment at 19 to 38 is disordered; it reads GNNINGEGSSSPSTSAPQVK. A PID domain is found at 55-215; it reads INGHVEYVAR…YILKKKIVEL (161 aa). 2 disordered regions span residues 241 to 385 and 464 to 492; these read TGPP…STAA and TGDLGGIEGESDYGTPSDRLNPKMMNLKQ. The span at 244 to 268 shows a compositional bias: pro residues; it reads PIYPGLGPPALPLSPMPQGPPPNIP. Residues 300–312 are compositionally biased toward low complexity; sequence ASPSVSPASTSPS. Positions 313–333 are enriched in pro residues; the sequence is GPAPSIPPPRPPALAPPPPVA. The segment covering 373 to 383 has biased composition (basic and acidic residues); that stretch reads FDPRAGEKKST.

It belongs to the ced-6 family. Homodimer. Interacts with ced-1. Interacts with E3 ubiquitin-protein ligase trim-21. Detected in gonadal sheath cells.

It is found in the cytoplasm. Its function is as follows. May function as an adapter protein in a pathway that mediates recognition and phagocytosis of apoptotic cells during normal development. Promotes engulfment of cells at both early and late stages of apoptosis. Required for actin reorganization around apoptotic cells. Plays a role in protecting dopaminergic neurons from oxidative stress-induced degeneration. Mediates recruitment of E3 ubiquitin-protein ligase trim-21 to the apoptotic cell surface which promotes ubiquitination and degradation of ced-1. In Caenorhabditis elegans, this protein is Cell death protein 6.